A 243-amino-acid chain; its full sequence is Carboxy-S-adenosyl-L-methionine synthase (243 aa).

S-adenosyl-L-methionine is bound by residues tyrosine 35, 68–70 (GCS), 92–93 (DN), and arginine 199.

This sequence belongs to the class I-like SAM-binding methyltransferase superfamily. Cx-SAM synthase family. In terms of assembly, homodimer.

The enzyme catalyses prephenate + S-adenosyl-L-methionine = carboxy-S-adenosyl-L-methionine + 3-phenylpyruvate + H2O. Its function is as follows. Catalyzes the conversion of S-adenosyl-L-methionine (SAM) to carboxy-S-adenosyl-L-methionine (Cx-SAM). The polypeptide is Carboxy-S-adenosyl-L-methionine synthase (Helicobacter pylori (strain J99 / ATCC 700824) (Campylobacter pylori J99)).